We begin with the raw amino-acid sequence, 835 residues long: Lon protease (835 aa).

A Lon N-terminal domain is found at Leu-4–Ile-224. Gly-412–Thr-419 is an ATP binding site. Residues Gln-649–Ala-832 form the Lon proteolytic domain. Catalysis depends on residues Ser-738 and Lys-781.

The protein belongs to the peptidase S16 family. Homohexamer. Organized in a ring with a central cavity.

The protein resides in the cytoplasm. It carries out the reaction Hydrolysis of proteins in presence of ATP.. Its function is as follows. ATP-dependent serine protease that mediates the selective degradation of mutant and abnormal proteins as well as certain short-lived regulatory proteins. Required for cellular homeostasis and for survival from DNA damage and developmental changes induced by stress. Degrades polypeptides processively to yield small peptide fragments that are 5 to 10 amino acids long. Binds to DNA in a double-stranded, site-specific manner. In Metamycoplasma arthritidis (strain 158L3-1) (Mycoplasma arthritidis), this protein is Lon protease.